Reading from the N-terminus, the 67-residue chain is SPbeta prophage-derived uncharacterized protein YopZ (67 aa).

Residues M1–V40 adopt a coiled-coil conformation. The chain crosses the membrane as a helical span at residues W44–W66.

The protein resides in the cell membrane. This chain is SPbeta prophage-derived uncharacterized protein YopZ (yopZ), found in Bacillus subtilis (strain 168).